Reading from the N-terminus, the 443-residue chain is Probable D-serine dehydratase (443 aa).

An N6-(pyridoxal phosphate)lysine modification is found at K118.

It belongs to the serine/threonine dehydratase family. DsdA subfamily. The cofactor is pyridoxal 5'-phosphate.

It catalyses the reaction D-serine = pyruvate + NH4(+). The sequence is that of Probable D-serine dehydratase from Vibrio campbellii (strain ATCC BAA-1116).